The sequence spans 234 residues: Probable transcriptional regulatory protein PSPTO_3162 (234 aa).

It belongs to the TACO1 family.

It localises to the cytoplasm. The protein is Probable transcriptional regulatory protein PSPTO_3162 of Pseudomonas syringae pv. tomato (strain ATCC BAA-871 / DC3000).